The chain runs to 263 residues: Putative inactive caspase B (263 aa).

The propeptide at 1-8 (MMCEDASD) is removed in mature form by cps-1 or ced-3.

Belongs to the peptidase C14A family. As to quaternary structure, interacts with ced-3 (via large subunit p17 or small subunit p13); the interaction inhibits ced-3 autoactivation. Cleavage by csp-1 isoform b or ced-3 removes the propeptide and generates subunit p31 in vitro. An additional cleavage at Asp-149 generates the 2 subunits p17 and p14 but this cleavage appears to be less efficient. As to expression, specifically expressed in the hermaphrodite germline.

It is found in the cytoplasm. Functionally, putative inactive caspase. In the germline, binds caspase ced-3 zymogen and prevents ced-3 autoactivation. Does not affect the caspase activity of mature ced-3 and ced-4-mediated mature ced-3 activation. Negatively regulates germline apoptosis by inhibiting autocleavage of caspase ced-3. Involved in fertility. In terms of biological role, putative inactive caspase. Dispensable for the inhibition of germline apoptosis. In Caenorhabditis elegans, this protein is Putative inactive caspase B.